The chain runs to 77 residues: MPHIDIKCFPRELDEQQKAALAADITDVIIRHLNSKDSSISIALQQIQPESWQAIWDAEIAPQMEALIKKPGYSMNA.

The active-site Proton acceptor; via imino nitrogen is Pro-2.

It belongs to the 4-oxalocrotonate tautomerase family. PptA subfamily. In terms of assembly, homodimer.

Its subcellular location is the cytoplasm. The protein is Tautomerase PptA of Escherichia coli (strain K12 / MC4100 / BW2952).